A 237-amino-acid chain; its full sequence is Demethylmenaquinone methyltransferase (237 aa).

Residues T58, D79, and 106–107 each bind S-adenosyl-L-methionine; that span reads NA.

This sequence belongs to the class I-like SAM-binding methyltransferase superfamily. MenG/UbiE family.

It catalyses the reaction a 2-demethylmenaquinol + S-adenosyl-L-methionine = a menaquinol + S-adenosyl-L-homocysteine + H(+). It participates in quinol/quinone metabolism; menaquinone biosynthesis; menaquinol from 1,4-dihydroxy-2-naphthoate: step 2/2. Methyltransferase required for the conversion of demethylmenaquinol (DMKH2) to menaquinol (MKH2). This Bacillus cytotoxicus (strain DSM 22905 / CIP 110041 / 391-98 / NVH 391-98) protein is Demethylmenaquinone methyltransferase.